Here is a 1153-residue protein sequence, read N- to C-terminus: Probable RNA-dependent RNA polymerase 3 (1153 aa).

This sequence belongs to the RdRP family. Expressed in shoot apical meristem (SAM) and panicles.

The enzyme catalyses RNA(n) + a ribonucleoside 5'-triphosphate = RNA(n+1) + diphosphate. Its function is as follows. Probably involved in the RNA silencing pathway and required for the generation of small interfering RNAs (siRNAs). The polypeptide is Probable RNA-dependent RNA polymerase 3 (RDR3) (Oryza sativa subsp. japonica (Rice)).